A 404-amino-acid chain; its full sequence is uncharacterized protein (404 aa).

Helical transmembrane passes span 3–23 (IIAK…PITE), 43–63 (TTQI…LTLG), 73–93 (PVVL…IFAP), 95–115 (IETL…GSVI), 135–155 (SLSP…GYII), 162–182 (YTFV…CKIL), 216–236 (IIGA…FIFI), 248–268 (KLAF…GYLI), 280–300 (ILGL…ALIL), 309–329 (IAVI…NLLI), 346–366 (TAGS…TFLV), and 377–397 (FALL…YILI).

The protein belongs to the major facilitator superfamily. Bcr/CmlA family.

It localises to the cell inner membrane. This is an uncharacterized protein from Rickettsia bellii (strain RML369-C).